The sequence spans 819 residues: Mitosis inhibitor protein kinase SWE1 (819 aa).

Ser36 carries the phosphoserine; by CDC5 modification. Phosphothreonine; by CDC28 is present on Thr45. Phosphoserine; by CDC28 is present on residues Ser56 and Ser63. Phosphoserine is present on Ser70. A Phosphothreonine; by CDC28 modification is found at Thr74. A disordered region spans residues 86-105 (KIEEEEEEEEEGKDEESVDS). Residues 88–102 (EEEEEEEEEGKDEES) are compositionally biased toward acidic residues. Position 102 is a phosphoserine; by CDC5 (Ser102). Ser105 carries the post-translational modification Phosphoserine; by CDC28. Ser111 carries the phosphoserine; by CDC5, CDC28 and CLA4 modification. The disordered stretch occupies residues 117-168 (ESVTTPITKRSAEKTNSPISLKQWNQRWFPKNDARTENTSSSSSYSVAKPNQ). Phosphoserine; by CDC5 is present on Ser118. Polar residues predominate over residues 118–142 (SVTTPITKRSAEKTNSPISLKQWNQ). Phosphothreonine; by CDC28 occurs at positions 121 and 124. Ser127 bears the Phosphoserine; by CDC28 mark. The residue at position 131 (Thr131) is a Phosphothreonine; by CDC5. Phosphoserine; by CDC28 is present on Ser133. A Phosphoserine; by CDC28 and CLA4 modification is found at Ser136. Phosphoserine; by CDC5 is present on residues Ser156 and Ser169. Thr196 is subject to Phosphothreonine; by CDC28. Phosphoserine; by CDC28 is present on Ser201. 2 positions are modified to phosphoserine; by CDC5: Ser225 and Ser254. At Ser262 the chain carries Phosphoserine. Ser263 and Ser266 each carry phosphoserine; by CDC28. A disordered region spans residues 278-297 (NQTNILSPTNSLVTNSSPQT). At Thr280 the chain carries Phosphothreonine; by CDC5. Phosphoserine occurs at positions 284 and 294. Ser312 carries the post-translational modification Phosphoserine; by CLA4. The segment at 341–395 (PIIISSHHSTRKNPQPYQFRGRYDNDTDEEISTPTRRKSIIGATSQTHRESRPLS) is disordered. Ser345 is modified (phosphoserine). 2 positions are modified to phosphothreonine; by CDC28: Thr367 and Thr373. Ser379 carries the phosphoserine; by CDC5 and CLA4 modification. Thr384 is modified (phosphothreonine; by CDC28). Phosphoserine; by CDC5 and CLA4 occurs at positions 395 and 438. One can recognise a Protein kinase domain in the interval 444 to 794 (FTNVHSIGKG…NQILQTEECL (351 aa)). ATP is bound by residues 450–458 (IGKGQFSTV) and Lys473. Catalysis depends on Asp579, which acts as the Proton acceptor. Positions 584 and 597 each coordinate Mg(2+). Residue Ser610 is modified to Phosphoserine; by CDC5. A Phosphothreonine; by CDC5 modification is found at Thr629. Thr688 is subject to Phosphothreonine; by CDC5 and CLA4. Thr692 is subject to Phosphothreonine. Residues 707 to 716 (SNNAGTSTVH) show a composition bias toward polar residues. Residues 707–736 (SNNAGTSTVHNNSNINNPNMNNGNDNNNVN) form a disordered region. Residues 717–736 (NNSNINNPNMNNGNDNNNVN) show a composition bias toward low complexity. Residue Lys741 forms a Glycyl lysine isopeptide (Lys-Gly) (interchain with G-Cter in ubiquitin) linkage.

Belongs to the protein kinase superfamily. Ser/Thr protein kinase family. WEE1 subfamily. As to quaternary structure, interacts with CLB2-CDC28. Partial hyperphosphorylation of SWE1 by CLB2-CDC28 stabilizes the ternary complex of SWE1 and CLB2-CDC28 and stimulates kinase activity of SWE1 in a positive feedback loop, maintaining CLB2-CDC28 in the tyrosine-phosphorylated state. Fully hyperphosphorylated SWE1 dissociates from CLB2-CDC28. Interacts with HSL7, KCC4 and MET30. In terms of processing, ubiquitinated by the SCF(MET30) complex, leading to its degradation by the proteasome. Post-translationally, phosphorylated progressively by CLA4, CLB2-CDC28 and CDC5. CLA4-dependent phosphorylation occurs in late S phase, followed by phosphorylation by CLB2-CDC28 in early G2, when the levels of mitotic CLB2 increases. This phosphorylation is critical for triggering subsequent SWE1-CDC5 interaction and CDC5-dependent phosphorylation. The resulting cumulative hyperphosphorylation down-regulates SWE1 by targeting it for ubiquitin-mediated degradation. This stepwise phosphorylation is thought to be a mechanism to integrate the different checkpoint requirements before entry into mitosis.

Its subcellular location is the bud neck. It is found in the nucleus. It catalyses the reaction L-seryl-[protein] + ATP = O-phospho-L-seryl-[protein] + ADP + H(+). The enzyme catalyses L-threonyl-[protein] + ATP = O-phospho-L-threonyl-[protein] + ADP + H(+). Protein kinase that acts as a negative regulator of entry into mitosis (G2 to M transition) by phosphorylating and inhibiting the mitosis-promoting cyclin B-bound CDC28 at 'Tyr-19'. SWE1-mediated inhibition of CDC28 acts in a cell size or morphogenesis checkpoint to delay mitosis in response to defects in growth, actin organization or bud formation. Inhibits the activity of B-type cyclins in replication initiation strongly for CLB2, moderately for CLB3 and CLB4, and there is no apparent inhibition for CLB5 and CLB6, correlating with the normal expression timing of those cyclins. Hyperphosphorylation and degradation of SWE1 when all checkpoint requirement are met releases CLB2-CDC28 from inhibition and allows for progression through the cell cycle. SWE1-dependent CDC28 phosphorylation is also required for pachytene arrest upon activation of the recombination checkpoint during meiosis. Also involved in the regulation of nitrogen starvation- and short chain alcohol-induced filamentous growth, or filamentous differentiation in response to slowed DNA synthesis. Can act both on serines and on tyrosines. In Saccharomyces cerevisiae (strain ATCC 204508 / S288c) (Baker's yeast), this protein is Mitosis inhibitor protein kinase SWE1 (SWE1).